The primary structure comprises 433 residues: Gamma-glutamyl phosphate reductase (433 aa).

Belongs to the gamma-glutamyl phosphate reductase family.

Its subcellular location is the cytoplasm. The enzyme catalyses L-glutamate 5-semialdehyde + phosphate + NADP(+) = L-glutamyl 5-phosphate + NADPH + H(+). Its pathway is amino-acid biosynthesis; L-proline biosynthesis; L-glutamate 5-semialdehyde from L-glutamate: step 2/2. Catalyzes the NADPH-dependent reduction of L-glutamate 5-phosphate into L-glutamate 5-semialdehyde and phosphate. The product spontaneously undergoes cyclization to form 1-pyrroline-5-carboxylate. This chain is Gamma-glutamyl phosphate reductase, found in Psychrobacter cryohalolentis (strain ATCC BAA-1226 / DSM 17306 / VKM B-2378 / K5).